Reading from the N-terminus, the 313-residue chain is Leucine-rich repeat-containing protein 52 (313 aa).

The first 23 residues, Met-1–Gly-23, serve as a signal peptide directing secretion. Residues Ser-24 to Leu-53 form the LRRNT domain. The Extracellular segment spans residues Ser-24–Asp-244. 2 disulfide bridges follow: Cys-26–Cys-32 and Cys-30–Cys-39. 5 LRR repeats span residues Asn-54–Leu-75, Asp-78–Gly-99, Lys-102–Val-123, Asn-126–Asn-148, and Ser-151–His-172. Asn-112 and Asn-148 each carry an N-linked (GlcNAc...) asparagine glycan. The 55-residue stretch at Asn-184–Thr-238 folds into the LRRCT domain. Intrachain disulfides connect Cys-188–Cys-214 and Cys-190–Cys-236. Asn-189 and Asn-211 each carry an N-linked (GlcNAc...) asparagine glycan. The chain crosses the membrane as a helical span at residues Tyr-245–Leu-265. Residues Thr-266 to Ile-313 are Cytoplasmic-facing.

May interact with KCNU1; this interaction may be required for LRRC52 stability and may change the channel gating properties. Interacts with KCNMA1. Post-translationally, N-glycosylated. Mainly expressed in testis and skeletal muscle.

The protein localises to the cell membrane. In terms of biological role, auxiliary protein of the large-conductance, voltage and calcium-activated potassium channel (BK alpha). Modulates gating properties by producing a marked shift in the BK channel's voltage dependence of activation in the hyperpolarizing direction, and in the absence of calcium. KCNU1 channel auxiliary protein. Modulates KCNU1 gating properties. In Homo sapiens (Human), this protein is Leucine-rich repeat-containing protein 52 (LRRC52).